Reading from the N-terminus, the 454-residue chain is Noelin-2 (454 aa).

A signal peptide spans 1 to 20 (MWPLTVPPPLLLLLCSGLAG). 2 coiled-coil regions span residues 58 to 85 (RDGR…LELR) and 136 to 193 (LEQY…AQKL). Asn74, Asn155, Asn275, Asn310, Asn399, and Asn441 each carry an N-linked (GlcNAc...) asparagine glycan. Residues 194–446 (GCGKLTGVSN…QVLYNVTLFH (253 aa)) form the Olfactomedin-like domain. Cys195 and Cys377 are oxidised to a cystine.

As to quaternary structure, peripherally associated with AMPAR complex. AMPAR complex consists of an inner core made of 4 pore-forming GluA/GRIA proteins (GRIA1, GRIA2, GRIA3 and GRIA4) and 4 major auxiliary subunits arranged in a twofold symmetry. One of the two pairs of distinct binding sites is occupied either by CNIH2, CNIH3 or CACNG2, CACNG3. The other harbors CACNG2, CACNG3, CACNG4, CACNG8 or GSG1L. This inner core of AMPAR complex is complemented by outer core constituents binding directly to the GluA/GRIA proteins at sites distinct from the interaction sites of the inner core constituents. Outer core constituents include at least PRRT1, PRRT2, CKAMP44/SHISA9, FRRS1L and NRN1. The proteins of the inner and outer core serve as a platform for other, more peripherally associated AMPAR constituents, including OLFM2. Alone or in combination, these auxiliary subunits control the gating and pharmacology of the AMPAR complex and profoundly impact their biogenesis and protein processing. Interacts with GRIA2. Interacts with OLFM1 and OLFM3. Interacts with SRF; the interaction promotes dissociation of SRF from the transcriptional repressor HEY2. Interacts with RUNX2. In terms of processing, N-glycosylated. Expressed in aortic smooth muscle (at protein level). In the fetus, expressed in the brain and ocular tissues including lens vesicle and optic cup.

The protein resides in the secreted. The protein localises to the synapse. It is found in the membrane. It localises to the nucleus. Its subcellular location is the cytoplasm. Involved in transforming growth factor beta (TGF-beta)-induced smooth muscle differentiation. TGF-beta induces expression and translocation of OLFM2 to the nucleus where it binds to SRF, causing its dissociation from the transcriptional repressor HEY2/HERP1 and facilitating binding of SRF to target genes. Plays a role in AMPAR complex organization. Is a regulator of vascular smooth-muscle cell (SMC) phenotypic switching, that acts by promoting RUNX2 and inhibiting MYOCD binding to SRF. SMC phenotypic switching is the process through which vascular SMCs undergo transition between a quiescent contractile phenotype and a proliferative synthetic phenotype in response to pathological stimuli. SMC phenotypic plasticity is essential for vascular development and remodeling. The sequence is that of Noelin-2 (OLFM2) from Homo sapiens (Human).